The following is a 310-amino-acid chain: Small ribosomal subunit biogenesis GTPase RsgA 2 (310 aa).

Positions 77-238 (LSKQSHILAA…IIDTPGIKGF (162 aa)) constitute a CP-type G domain. GTP is bound by residues 126-129 (NKVD) and 180-188 (GHSGVGKST). 4 residues coordinate Zn(2+): Cys-262, Cys-267, His-269, and Cys-275.

Belongs to the TRAFAC class YlqF/YawG GTPase family. RsgA subfamily. As to quaternary structure, monomer. Associates with 30S ribosomal subunit, binds 16S rRNA. Zn(2+) is required as a cofactor.

The protein resides in the cytoplasm. Its function is as follows. One of several proteins that assist in the late maturation steps of the functional core of the 30S ribosomal subunit. Helps release RbfA from mature subunits. May play a role in the assembly of ribosomal proteins into the subunit. Circularly permuted GTPase that catalyzes slow GTP hydrolysis, GTPase activity is stimulated by the 30S ribosomal subunit. The protein is Small ribosomal subunit biogenesis GTPase RsgA 2 of Bacteroides thetaiotaomicron (strain ATCC 29148 / DSM 2079 / JCM 5827 / CCUG 10774 / NCTC 10582 / VPI-5482 / E50).